The following is a 585-amino-acid chain: MSNPRKRSIPMRDSNTGLEQLLAEDSFDESDFSEIDDSDNFSDSALEADKIRPLSHLESDGKSSTSSDSGRSMKWSARAMIPRQRYDFTGTPGRKVDVSDITDPLQYFELFFTEELVSKITRETNAQAALLASKPPGPKGFSRMDKWKDTDNDELKVFFAVMLLQGIVQKPELEMFWSTRPLLDTPYLRQIMTGERFLLLFRCLHFVNNSSISAGQSKAQISLQKIKPVFDFLVNKFSTVYTPNRNIAVDESLMLFKGPLAMKQYLPTKRVRFGLKLYVLCESQSGYVWNALVHTGPGMNLKDSADGLKSSRIVLTLVNDLLGQGYCVFLDNFNISPMLFRELHQNRTDAVGTARLNRKQIPNDLKKRIAKGTTVARFCGELMALKWCDGKEVTMLSTFHNDTVIEVNNRNGKKTKRPRVIVDYNENMGAVDSADQMLTSYPSERKRHKVWYKKFFHHLLHITVLNSYILFKKDNPEHTMSHINFRLALIERMLEKHHKPGQQHLRGRPCSDDVTPLRLSGRHFPKSIPATSGKQNPTGRCKICCSQYDKDGKKIRKETRYFCAECDVPLCVVPCFEIYHTKKNY.

Residues 1–73 (MSNPRKRSIP…STSSDSGRSM (73 aa)) form a disordered region. A compositionally biased stretch (acidic residues) spans 25–40 (DSFDESDFSEIDDSDN). Basic and acidic residues predominate over residues 47 to 61 (EADKIRPLSHLESDG). Positions 62 to 72 (KSSTSSDSGRS) are enriched in low complexity.

This Homo sapiens (Human) protein is PiggyBac transposable element-derived protein 4 (PGBD4).